We begin with the raw amino-acid sequence, 185 residues long: NEDD8-conjugating enzyme UBE2F (185 aa).

The interaction with UBA3 stretch occupies residues 1-29; it reads MLTLASKLKRDDGVRGPRASNPASDSTRR. Residues 11–30 form a disordered region; the sequence is DDGVRGPRASNPASDSTRRV. Residues 32 to 185 enclose the UBC core domain; the sequence is VRDKLLVKEV…VEDYIKRYAR (154 aa). Cys116 acts as the Glycyl thioester intermediate in catalysis.

It belongs to the ubiquitin-conjugating enzyme family. UBE2F subfamily.

The enzyme catalyses [E1 NEDD8-activating enzyme]-S-[NEDD8 protein]-yl-L-cysteine + [E2 NEDD8-conjugating enzyme]-L-cysteine = [E1 NEDD8-activating enzyme]-L-cysteine + [E2 NEDD8-conjugating enzyme]-S-[NEDD8-protein]-yl-L-cysteine.. The protein operates within protein modification; protein neddylation. In terms of biological role, accepts the ubiquitin-like protein NEDD8 from the UBA3-NAE1 E1 complex and catalyzes its covalent attachment to other proteins. Together with the E3 ubiquitin ligase RNF7/RBX2, specifically neddylates cullin-5 (CUL5). Does not neddylate CUL1, CUL2, CUL3, CUL4A or CUL4B. This chain is NEDD8-conjugating enzyme UBE2F (UBE2F), found in Gallus gallus (Chicken).